A 192-amino-acid chain; its full sequence is Adenylate kinase (192 aa).

ATP is bound at residue 10-15 (GSGKGT). The interval 30 to 59 (STGDMLREVISRETEVGRKAKAIINAGALV) is NMP. Residues threonine 31, arginine 36, 57 to 59 (ALV), 85 to 88 (GYPR), and glutamine 92 each bind AMP. Positions 126–142 (KRVQETIAVGGQVRSDD) are LID. Residue arginine 127 coordinates ATP. The AMP site is built by arginine 139 and arginine 150. Methionine 178 contributes to the ATP binding site.

It belongs to the adenylate kinase family. In terms of assembly, monomer.

The protein localises to the cytoplasm. The catalysed reaction is AMP + ATP = 2 ADP. It participates in purine metabolism; AMP biosynthesis via salvage pathway; AMP from ADP: step 1/1. In terms of biological role, catalyzes the reversible transfer of the terminal phosphate group between ATP and AMP. Plays an important role in cellular energy homeostasis and in adenine nucleotide metabolism. In Bartonella quintana (strain Toulouse) (Rochalimaea quintana), this protein is Adenylate kinase.